Consider the following 542-residue polypeptide: MLTRTFLGMAISAFLASTGVQAAWSSHGPNVMYYWGQNSAGGSNTQASLGTYCESGQVDAVLLSFLHVFNVGGIPEINLSSACAGTYFPNTQLLSCPAVGADIKKCQDKGVKVILSLGGAAGVYGFTSDAQGQQFAQTIWNLFGGGNSDTRPFGDAVIDGVDLDIEGGSSTGYVAFVNALRQKFSSNFLIGAAPQCPFPDAILGSVLNSASFDYVNVQFYNNYCSATGSSFNFDTWDNWAKTTSPNKNVKIMFTVPGSSTAAGSGYVPMSTLQTIVPSLASKYSSYGGVSVWDASQAWNNGGFNSQLYSLVHSGGSTPPPPSSSSATKTTTKTTATSTKTTTTTAPTATSTPGSCPVANQPCSTQNQYACTADGKYAVCDHGKWVASSCPSNTVCIPTTDGASIYCGYATGSGSTCPSVSALEITAASLGSKNGPVPRPYKASKVAAQLAVTSTDKNSFEAVINARRTTLTPFEKSVTIEFTTPSNIKFTESDMGPVRQVGNKVRIQAKNDYNESMTLVVKVKGSINSGVFVAPSTSAWNFK.

An N-terminal signal peptide occupies residues 1-22 (MLTRTFLGMAISAFLASTGVQA). The GH18 domain occupies 29 to 314 (PNVMYYWGQN…SQLYSLVHSG (286 aa)). The active-site Proton donor is the glutamate 166. Positions 312-356 (HSGGSTPPPPSSSSATKTTTKTTATSTKTTTTTAPTATSTPGSCP) are disordered. Residues 323-354 (SSSATKTTTKTTATSTKTTTTTAPTATSTPGS) show a composition bias toward low complexity. Residues 355–406 (CPVANQPCSTQNQYACTADGKYAVCDHGKWVASSCPSNTVCIPTTDGASIYC) are chitin-binding, high affinity. Positions 447 to 542 (AQLAVTSTDK…APSTSAWNFK (96 aa)) are excised as a propeptide.

It belongs to the glycosyl hydrolase 18 family. Chitinase class III subfamily. In terms of assembly, monomer. In terms of processing, O-glycosylated.

The protein localises to the secreted. It carries out the reaction Random endo-hydrolysis of N-acetyl-beta-D-glucosaminide (1-&gt;4)-beta-linkages in chitin and chitodextrins.. In terms of biological role, probably involved in the apical growth and branching of fungal hyphae. The polypeptide is Chitinase 2 (CHI2) (Rhizopus oligosporus (Rhizopus microsporus var. oligosporus)).